The sequence spans 195 residues: Large ribosomal subunit protein bL32m (195 aa).

Zn(2+) contacts are provided by C95, C98, C108, and C111.

It belongs to the bacterial ribosomal protein bL32 family. Component of the mitochondrial large ribosomal subunit (mt-LSU).

It is found in the mitochondrion. Functionally, component of the mitochondrial large ribosomal subunit (mt-LSU). The mitochondrial ribosome (mitoribosome) is a large ribonucleoprotein complex responsible for the synthesis of proteins inside mitochondria. This chain is Large ribosomal subunit protein bL32m (mRpL32), found in Drosophila melanogaster (Fruit fly).